Consider the following 326-residue polypeptide: Apoptosis facilitator Bcl-2-like protein 14 (326 aa).

Residue Ser-44 is modified to Phosphoserine. The interval 100-147 (AEKEEDSQSSPPEICAQAQRSGVPQARPRSPKWPRSRSSMDQRLEHKA) is disordered. Residues 137–147 (SSMDQRLEHKA) show a composition bias toward basic and acidic residues. Positions 211–225 (IVELLKYSGEQLERE) match the BH3 motif. The BH2 signature appears at 307 to 314 (WIQQHGGW).

This sequence belongs to the Bcl-2 family. In terms of processing, phosphorylated by MELK, leading to inhibit its pro-apoptotic function.

It localises to the cytoplasm. In terms of biological role, plays a role in apoptosis. This is Apoptosis facilitator Bcl-2-like protein 14 (BCL2L14) from Bos taurus (Bovine).